The following is a 264-amino-acid chain: GTP cyclohydrolase FolE2 (264 aa).

The protein belongs to the GTP cyclohydrolase IV family.

The enzyme catalyses GTP + H2O = 7,8-dihydroneopterin 3'-triphosphate + formate + H(+). It participates in cofactor biosynthesis; 7,8-dihydroneopterin triphosphate biosynthesis; 7,8-dihydroneopterin triphosphate from GTP: step 1/1. Functionally, converts GTP to 7,8-dihydroneopterin triphosphate. The chain is GTP cyclohydrolase FolE2 from Akkermansia muciniphila (strain ATCC BAA-835 / DSM 22959 / JCM 33894 / BCRC 81048 / CCUG 64013 / CIP 107961 / Muc).